The sequence spans 885 residues: Leucine--tRNA ligase (885 aa).

Residues 53-63 (PYPSGKLHMGH) carry the 'HIGH' region motif. The 'KMSKS' region signature appears at 631–635 (KMSKS). Lys-634 lines the ATP pocket.

This sequence belongs to the class-I aminoacyl-tRNA synthetase family.

It localises to the cytoplasm. The catalysed reaction is tRNA(Leu) + L-leucine + ATP = L-leucyl-tRNA(Leu) + AMP + diphosphate. This chain is Leucine--tRNA ligase, found in Psychrobacter sp. (strain PRwf-1).